The chain runs to 449 residues: Glutamyl-tRNA reductase (449 aa).

Residues 58–61, Ser121, 126–128, and Gln132 contribute to the substrate site; these read TCNR and ETQ. Cys59 (nucleophile) is an active-site residue. Residue 203–208 participates in NADP(+) binding; sequence GLGEMA.

This sequence belongs to the glutamyl-tRNA reductase family. In terms of assembly, homodimer.

It catalyses the reaction (S)-4-amino-5-oxopentanoate + tRNA(Glu) + NADP(+) = L-glutamyl-tRNA(Glu) + NADPH + H(+). It functions in the pathway porphyrin-containing compound metabolism; protoporphyrin-IX biosynthesis; 5-aminolevulinate from L-glutamyl-tRNA(Glu): step 1/2. Its function is as follows. Catalyzes the NADPH-dependent reduction of glutamyl-tRNA(Glu) to glutamate 1-semialdehyde (GSA). The protein is Glutamyl-tRNA reductase of Helicobacter pylori (strain Shi470).